The chain runs to 253 residues: Phosphoribosylaminoimidazole-succinocarboxamide synthase (253 aa).

The protein belongs to the SAICAR synthetase family.

The enzyme catalyses 5-amino-1-(5-phospho-D-ribosyl)imidazole-4-carboxylate + L-aspartate + ATP = (2S)-2-[5-amino-1-(5-phospho-beta-D-ribosyl)imidazole-4-carboxamido]succinate + ADP + phosphate + 2 H(+). Its pathway is purine metabolism; IMP biosynthesis via de novo pathway; 5-amino-1-(5-phospho-D-ribosyl)imidazole-4-carboxamide from 5-amino-1-(5-phospho-D-ribosyl)imidazole-4-carboxylate: step 1/2. In Dinoroseobacter shibae (strain DSM 16493 / NCIMB 14021 / DFL 12), this protein is Phosphoribosylaminoimidazole-succinocarboxamide synthase.